A 560-amino-acid chain; its full sequence is Bifunctional NAD(P)H-hydrate repair enzyme (560 aa).

Positions 1–241 (MLSRLSERCT…WMTAPERMRV (241 aa)) are NAD(P)H-hydrate epimerase. One can recognise a YjeF N-terminal domain in the interval 29–235 (LRDAEPAAAA…SLGLEDWMTA (207 aa)). Residues 77–81 (NNGGD) form an NADPHX 1; for epimerase activity region. K(+) is bound by residues asparagine 78 and aspartate 145. Residues 149 to 155 (GTGICGP) form an NADPHX 1; for epimerase activity region. The (6S)-NADPHX site is built by tyrosine 160 and aspartate 178. Serine 181 is a binding site for K(+). In terms of domain architecture, YjeF C-terminal spans 249-547 (LDDVYEYFGI…HRVPLIVNAS (299 aa)). The ADP-dependent (S)-NAD(P)H-hydrate dehydratase stretch occupies residues 249-560 (LDDVYEYFGI…PASRQRPSGQ (312 aa)). Residue glycine 351 participates in (6S)-NADPHX binding. The interval 417-423 (HPGEAAR) is NADPHX 2; for dehydratase activity. ADP-binding positions include 454–458 (KGPGT) and 475–484 (NAGMASGGMG). Aspartate 485 contacts (6S)-NADPHX.

The protein in the N-terminal section; belongs to the NnrE/AIBP family. This sequence in the C-terminal section; belongs to the NnrD/CARKD family. K(+) is required as a cofactor.

The catalysed reaction is (6S)-NADHX + ADP = AMP + phosphate + NADH + H(+). It catalyses the reaction (6S)-NADPHX + ADP = AMP + phosphate + NADPH + H(+). It carries out the reaction (6R)-NADHX = (6S)-NADHX. The enzyme catalyses (6R)-NADPHX = (6S)-NADPHX. Its function is as follows. Bifunctional enzyme that catalyzes the epimerization of the S- and R-forms of NAD(P)HX and the dehydration of the S-form of NAD(P)HX at the expense of ADP, which is converted to AMP. This allows the repair of both epimers of NAD(P)HX, a damaged form of NAD(P)H that is a result of enzymatic or heat-dependent hydration. This chain is Bifunctional NAD(P)H-hydrate repair enzyme, found in Leishmania major.